The following is a 183-amino-acid chain: Glutathione-regulated potassium-efflux system ancillary protein KefG (183 aa).

It belongs to the NAD(P)H dehydrogenase (quinone) family. KefG subfamily. In terms of assembly, interacts with KefB.

Its subcellular location is the cell inner membrane. The enzyme catalyses a quinone + NADH + H(+) = a quinol + NAD(+). It carries out the reaction a quinone + NADPH + H(+) = a quinol + NADP(+). Its function is as follows. Regulatory subunit of a potassium efflux system that confers protection against electrophiles. Required for full activity of KefB. This is Glutathione-regulated potassium-efflux system ancillary protein KefG from Yersinia pestis bv. Antiqua (strain Angola).